The chain runs to 316 residues: Cytochrome c biogenesis protein CcsA (316 aa).

A run of 7 helical transmembrane segments spans residues 15–35, 44–64, 71–91, 142–162, 220–240, 247–267, and 281–301; these read FSIC…TTIL, GIIT…IYSG, LYES…VAYL, MILS…LLVI, VISL…VWAN, WSWD…AIYL, and AIVA…VNLL.

Belongs to the CcmF/CycK/Ccl1/NrfE/CcsA family. As to quaternary structure, may interact with Ccs1.

The protein localises to the plastid. It is found in the chloroplast thylakoid membrane. Functionally, required during biogenesis of c-type cytochromes (cytochrome c6 and cytochrome f) at the step of heme attachment. This Trachelium caeruleum (Blue throatwort) protein is Cytochrome c biogenesis protein CcsA.